A 93-amino-acid chain; its full sequence is Pyrimidine/purine nucleoside phosphorylase (93 aa).

It belongs to the nucleoside phosphorylase PpnP family.

The enzyme catalyses a purine D-ribonucleoside + phosphate = a purine nucleobase + alpha-D-ribose 1-phosphate. The catalysed reaction is adenosine + phosphate = alpha-D-ribose 1-phosphate + adenine. It catalyses the reaction cytidine + phosphate = cytosine + alpha-D-ribose 1-phosphate. It carries out the reaction guanosine + phosphate = alpha-D-ribose 1-phosphate + guanine. The enzyme catalyses inosine + phosphate = alpha-D-ribose 1-phosphate + hypoxanthine. The catalysed reaction is thymidine + phosphate = 2-deoxy-alpha-D-ribose 1-phosphate + thymine. It catalyses the reaction uridine + phosphate = alpha-D-ribose 1-phosphate + uracil. It carries out the reaction xanthosine + phosphate = alpha-D-ribose 1-phosphate + xanthine. Functionally, catalyzes the phosphorolysis of diverse nucleosides, yielding D-ribose 1-phosphate and the respective free bases. Can use uridine, adenosine, guanosine, cytidine, thymidine, inosine and xanthosine as substrates. Also catalyzes the reverse reactions. This Vibrio vulnificus (strain CMCP6) protein is Pyrimidine/purine nucleoside phosphorylase.